We begin with the raw amino-acid sequence, 346 residues long: DNA primase small subunit PriS (346 aa).

Catalysis depends on residues Asp-97, Asp-99, and Asp-280.

This sequence belongs to the eukaryotic-type primase small subunit family. As to quaternary structure, heterodimer of a small subunit (PriS) and a large subunit (PriL). It depends on Mg(2+) as a cofactor. Mn(2+) serves as cofactor.

Functionally, catalytic subunit of DNA primase, an RNA polymerase that catalyzes the synthesis of short RNA molecules used as primers for DNA polymerase during DNA replication. The small subunit contains the primase catalytic core and has DNA synthesis activity on its own. Binding to the large subunit stabilizes and modulates the activity, increasing the rate of DNA synthesis while decreasing the length of the DNA fragments, and conferring RNA synthesis capability. The DNA polymerase activity may enable DNA primase to also catalyze primer extension after primer synthesis. May also play a role in DNA repair. The protein is DNA primase small subunit PriS of Thermococcus kodakarensis (strain ATCC BAA-918 / JCM 12380 / KOD1) (Pyrococcus kodakaraensis (strain KOD1)).